The primary structure comprises 488 residues: Cysteine--tRNA ligase (488 aa).

A Zn(2+)-binding site is contributed by Cys-40. Positions 42–52 (MTVYDYCHIGH) match the 'HIGH' region motif. Residues Cys-221, His-246, and Glu-250 each contribute to the Zn(2+) site. Residues 278–282 (KMSKS) carry the 'KMSKS' region motif. Residue Lys-281 coordinates ATP.

This sequence belongs to the class-I aminoacyl-tRNA synthetase family. As to quaternary structure, monomer. The cofactor is Zn(2+).

It localises to the cytoplasm. It catalyses the reaction tRNA(Cys) + L-cysteine + ATP = L-cysteinyl-tRNA(Cys) + AMP + diphosphate. In Psychrobacter cryohalolentis (strain ATCC BAA-1226 / DSM 17306 / VKM B-2378 / K5), this protein is Cysteine--tRNA ligase.